Reading from the N-terminus, the 211-residue chain is Protein 33K (211 aa).

Disordered stretches follow at residues 1–95 (MPPK…PCSL) and 107–140 (AGSP…QDSP). Positions 24 to 65 (DEEETWDDSQAEEVSDEEAEEQMESWDSLDEEDLEDVEEETI) are enriched in acidic residues. The span at 83-92 (KTIPPLPPQP) shows a compositional bias: pro residues. Polar residues predominate over residues 129 to 140 (TSSAIATRQDSP). Residues 154 to 181 (YAIFQQSRGQQLELKVKNRSLRSLTRSC) are necessary for nuclear subcellular location. An RS-repeat; required for splicing enhancer activity region spans residues 160 to 180 (SRGQQLELKVKNRSLRSLTRS).

Belongs to the adenoviridae splicing factor family. In terms of assembly, homooligomer. Interacts with DBP; this interaction occurs at a unique vertex during genome packaging. Interacts with IVa2; this interaction occurs at a unique vertex during genome packaging and seems to potentiate IVa2 and 33K oligomerization. Post-translationally, phosphorylated in vitro by human PKA and PRKDC. PRKDC inhibits, whereas PKA activates the splicing factor.

It localises to the host nucleus. Functionally, promotes alternative splicing of late transcripts by promoting splicing at weak 3' splice sites. Required for the temporal activation of major late pre-mRNA splicing at late times of infection. Induces the splicing and expression of the late capsid vertex protein. In terms of biological role, probably functions as the small terminase that is part of the molecular motor that translocates genomic DNA in empty capsid during DNA packaging. This motor is located at a unique vertex and comprises at least the IVa2 ATPase, the small terminase 33K and probably a portal. Forms a ring-like structure of about 17 nm in which genomic DNA is translocated into the capsid. Stimulates IVa2 ATPase activity in the presence of the viral genome. Once the DNA is packaged, the terminase detaches: the 33K protein is present in the empty particles, but not in the mature virions. Also involved in virion assembly. This Human adenovirus F serotype 40 (HAdV-40) protein is Protein 33K.